Reading from the N-terminus, the 528-residue chain is Proteinaceous RNase P 2 (528 aa).

Basic and acidic residues predominate over residues 1–16; the sequence is MAASDQHRSRRHDESS. A disordered region spans residues 1 to 28; that stretch reads MAASDQHRSRRHDESSSRPNKKKKVSRN. PPR repeat units lie at residues 29–64, 72–107, 108–142, and 145–179; these read PETNLLFNLNSCSKSKDLSAALALYDAAITSSEVRL, LLYLCSASITDISLQYLAIDRGFEIFDRMVSSGISP, NEASVTSVARLAAAKGNGDYAFKVVKEFVSVGGVS, and RLRTYAPALLCFCEKLEAEKGYEVEEHMEAAGIAL. The PRORP domain maps to 275–511; it reads VSSTGRCLSC…NEESSRTWMC (237 aa). Zn(2+) is bound by residues Cys281 and Cys284. Residues Asp343, Asp421, Asp422, and Asp440 each coordinate Mg(2+). 2 residues coordinate Zn(2+): His494 and Cys511.

Belongs to the PPR family. P subfamily. Monomer; forms dimers in crystallo but monomers in solution. Requires Mg(2+) as cofactor.

Its subcellular location is the nucleus. It carries out the reaction Endonucleolytic cleavage of RNA, removing 5'-extranucleotides from tRNA precursor.. Its function is as follows. Endonuclease RNase P responsible for the 5' maturation of tRNA precursors. Preferentially binds precursor tRNAs containing short 5' leaders and 3' trailers. Also involved in the maturation of mRNA and small nucleolar RNA (snoRNA). In Arabidopsis thaliana (Mouse-ear cress), this protein is Proteinaceous RNase P 2 (PRORP2).